The following is a 203-amino-acid chain: Large ribosomal subunit protein uL13 (203 aa).

An N-acetylalanine modification is found at alanine 2. Arginine 59 carries the citrulline modification. Serine 77 carries the phosphoserine modification. Arginine 140 is modified (citrulline). Lysine 191 bears the N6-acetyllysine mark.

The protein belongs to the universal ribosomal protein uL13 family. As to quaternary structure, component of the 60S ribosome. Component of the GAIT complex. Interacts with EIF4G1. Post-translationally, phosphorylation at Ser-77 upon interferon-gamma treatment in macrophages involves a DAPK1-DAPK3 kinase cascade and is causing release from the ribosome, association with the GAIT complex and subsequent involvement in transcript-selective translation inhibition. Citrullinated by PADI4.

The protein localises to the cytoplasm. Functionally, associated with ribosomes but is not required for canonical ribosome function and has extra-ribosomal functions. Component of the GAIT (gamma interferon-activated inhibitor of translation) complex which mediates interferon-gamma-induced transcript-selective translation inhibition in inflammation processes. Upon interferon-gamma activation and subsequent phosphorylation dissociates from the ribosome and assembles into the GAIT complex which binds to stem loop-containing GAIT elements in the 3'-UTR of diverse inflammatory mRNAs (such as ceruplasmin) and suppresses their translation. In the GAIT complex interacts with m7G cap-bound eIF4G at or near the eIF3-binding site and blocks the recruitment of the 43S ribosomal complex. Involved in methylation of rRNA. The chain is Large ribosomal subunit protein uL13 (RPL13A) from Bos taurus (Bovine).